A 460-amino-acid polypeptide reads, in one-letter code: Bifunctional protein GlmU (460 aa).

Positions M1–R229 are pyrophosphorylase. Residues L8–G11, K22, Q72, and G77–T78 each bind UDP-N-acetyl-alpha-D-glucosamine. D102 lines the Mg(2+) pocket. Residues G139, E154, N169, and N227 each coordinate UDP-N-acetyl-alpha-D-glucosamine. Position 227 (N227) interacts with Mg(2+). The segment at L230–N250 is linker. Positions G251–Q460 are N-acetyltransferase. R332 and K350 together coordinate UDP-N-acetyl-alpha-D-glucosamine. Catalysis depends on H362, which acts as the Proton acceptor. Positions 365 and 376 each coordinate UDP-N-acetyl-alpha-D-glucosamine. Acetyl-CoA contacts are provided by residues A379, N385 to Y386, S404, A422, and R439.

This sequence in the N-terminal section; belongs to the N-acetylglucosamine-1-phosphate uridyltransferase family. In the C-terminal section; belongs to the transferase hexapeptide repeat family. As to quaternary structure, homotrimer. Requires Mg(2+) as cofactor.

It localises to the cytoplasm. It carries out the reaction alpha-D-glucosamine 1-phosphate + acetyl-CoA = N-acetyl-alpha-D-glucosamine 1-phosphate + CoA + H(+). The catalysed reaction is N-acetyl-alpha-D-glucosamine 1-phosphate + UTP + H(+) = UDP-N-acetyl-alpha-D-glucosamine + diphosphate. Its pathway is nucleotide-sugar biosynthesis; UDP-N-acetyl-alpha-D-glucosamine biosynthesis; N-acetyl-alpha-D-glucosamine 1-phosphate from alpha-D-glucosamine 6-phosphate (route II): step 2/2. The protein operates within nucleotide-sugar biosynthesis; UDP-N-acetyl-alpha-D-glucosamine biosynthesis; UDP-N-acetyl-alpha-D-glucosamine from N-acetyl-alpha-D-glucosamine 1-phosphate: step 1/1. It participates in bacterial outer membrane biogenesis; LPS lipid A biosynthesis. In terms of biological role, catalyzes the last two sequential reactions in the de novo biosynthetic pathway for UDP-N-acetylglucosamine (UDP-GlcNAc). The C-terminal domain catalyzes the transfer of acetyl group from acetyl coenzyme A to glucosamine-1-phosphate (GlcN-1-P) to produce N-acetylglucosamine-1-phosphate (GlcNAc-1-P), which is converted into UDP-GlcNAc by the transfer of uridine 5-monophosphate (from uridine 5-triphosphate), a reaction catalyzed by the N-terminal domain. This chain is Bifunctional protein GlmU, found in Streptococcus equi subsp. zooepidemicus (strain ATCC 35246 / C74-63).